We begin with the raw amino-acid sequence, 354 residues long: UPF0425 pyridoxal phosphate-dependent protein MMP0002 (354 aa).

Lysine 210 carries the N6-(pyridoxal phosphate)lysine modification.

Belongs to the UPF0425 family. Pyridoxal 5'-phosphate is required as a cofactor.

This Methanococcus maripaludis (strain DSM 14266 / JCM 13030 / NBRC 101832 / S2 / LL) protein is UPF0425 pyridoxal phosphate-dependent protein MMP0002.